Consider the following 365-residue polypeptide: Peptide chain release factor 2 (365 aa).

At Q251 the chain carries N5-methylglutamine.

Belongs to the prokaryotic/mitochondrial release factor family. In terms of processing, methylated by PrmC. Methylation increases the termination efficiency of RF2.

Its subcellular location is the cytoplasm. In terms of biological role, peptide chain release factor 2 directs the termination of translation in response to the peptide chain termination codons UGA and UAA. This is Peptide chain release factor 2 from Sulfurimonas denitrificans (strain ATCC 33889 / DSM 1251) (Thiomicrospira denitrificans (strain ATCC 33889 / DSM 1251)).